Here is a 326-residue protein sequence, read N- to C-terminus: MSRVSEQPVDRITIPLLQRWKQDGRRLVMTTAYDAVAAPIPDPSIDISLVGDSGGNVCLGFENTPPVSVAMMNHHLEAAVRSKPRALLVADMSFLSFHVSVEETIRNAGGFLQRGAAAARLEGGGKRIEMVRAIVDCEIPVMGHLGLVPQSVNVMGGFKVQGRKVDEALRLLDDAHRLQEASCFALVLEGTPAELTARVSDSLTIPTIGIGSGPDCSEQVLCFMTCWAKPKVIAPNSFPPIRKAFSSSMMRFRAGQRMSAVARSPARKSPIGFPKALGRQLPTGRHPPQIITSVAELRRTLAKSRSANQRAGLCRRWAISTMATWR.

Residues Asp-52, Asp-91, and Glu-122 each contribute to the Mg(2+) site. 3-methyl-2-oxobutanoate is bound by residues 52 to 53 and Asp-91; that span reads DS. Glu-189 acts as the Proton acceptor in catalysis.

Belongs to the PanB family. As to quaternary structure, homodecamer; pentamer of dimers. It depends on Mg(2+) as a cofactor.

The protein resides in the cytoplasm. It carries out the reaction 3-methyl-2-oxobutanoate + (6R)-5,10-methylene-5,6,7,8-tetrahydrofolate + H2O = 2-dehydropantoate + (6S)-5,6,7,8-tetrahydrofolate. Its pathway is cofactor biosynthesis; (R)-pantothenate biosynthesis; (R)-pantoate from 3-methyl-2-oxobutanoate: step 1/2. In terms of biological role, catalyzes the reversible reaction in which hydroxymethyl group from 5,10-methylenetetrahydrofolate is transferred onto alpha-ketoisovalerate to form ketopantoate. This chain is 3-methyl-2-oxobutanoate hydroxymethyltransferase 1, found in Bradyrhizobium diazoefficiens (strain JCM 10833 / BCRC 13528 / IAM 13628 / NBRC 14792 / USDA 110).